Here is a 158-residue protein sequence, read N- to C-terminus: NADH-quinone oxidoreductase subunit B (158 aa).

Cys-37, Cys-38, Cys-102, and Cys-132 together coordinate [4Fe-4S] cluster.

This sequence belongs to the complex I 20 kDa subunit family. As to quaternary structure, NDH-1 is composed of 14 different subunits. Subunits NuoB, C, D, E, F, and G constitute the peripheral sector of the complex. It depends on [4Fe-4S] cluster as a cofactor.

It is found in the cell inner membrane. It carries out the reaction a quinone + NADH + 5 H(+)(in) = a quinol + NAD(+) + 4 H(+)(out). Its function is as follows. NDH-1 shuttles electrons from NADH, via FMN and iron-sulfur (Fe-S) centers, to quinones in the respiratory chain. Couples the redox reaction to proton translocation (for every two electrons transferred, four hydrogen ions are translocated across the cytoplasmic membrane), and thus conserves the redox energy in a proton gradient. This is NADH-quinone oxidoreductase subunit B from Hydrogenovibrio crunogenus (strain DSM 25203 / XCL-2) (Thiomicrospira crunogena).